The chain runs to 237 residues: MIPWLAGRPDFPPVEQALEDPDGLLAAGGELSPAWLLAAYRRGIFPWYTEDQPILWWSPDPRLVLIPAHLRISRSLRRTLRQQRFEVRFDTAFADVIAACAEPREPGGGTWISPEIRQAYLRLHELGYAHSVESWVDGTLVGGLYGIALGRAFFGESMFSRRSDASKVALVHLAAHLQRLGFAAIDCQMTTAHLLSLGAEEMPRARFCAGLANWTNEGPGPGRWSCEKAAEISRNFS.

This sequence belongs to the L/F-transferase family.

The protein localises to the cytoplasm. The catalysed reaction is N-terminal L-lysyl-[protein] + L-leucyl-tRNA(Leu) = N-terminal L-leucyl-L-lysyl-[protein] + tRNA(Leu) + H(+). It catalyses the reaction N-terminal L-arginyl-[protein] + L-leucyl-tRNA(Leu) = N-terminal L-leucyl-L-arginyl-[protein] + tRNA(Leu) + H(+). It carries out the reaction L-phenylalanyl-tRNA(Phe) + an N-terminal L-alpha-aminoacyl-[protein] = an N-terminal L-phenylalanyl-L-alpha-aminoacyl-[protein] + tRNA(Phe). In terms of biological role, functions in the N-end rule pathway of protein degradation where it conjugates Leu, Phe and, less efficiently, Met from aminoacyl-tRNAs to the N-termini of proteins containing an N-terminal arginine or lysine. The polypeptide is Leucyl/phenylalanyl-tRNA--protein transferase (Aromatoleum aromaticum (strain DSM 19018 / LMG 30748 / EbN1) (Azoarcus sp. (strain EbN1))).